A 366-amino-acid chain; its full sequence is Prostaglandin F2-alpha receptor (366 aa).

The Extracellular portion of the chain corresponds to 1–31 (MSINSSKQPASSAAGLIANTTCQTENRLSVF). N-linked (GlcNAc...) asparagine glycosylation is found at N4 and N19. The helical transmembrane segment at 32-55 (FSIIFMTVGIVSNSLAIAILMKAY) threads the bilayer. Residues 56-69 (QRFRRKSKASFLLL) lie on the Cytoplasmic side of the membrane. A helical membrane pass occupies residues 70–90 (ASGLVITDFFGHLINGGIAVF). Residues 91 to 109 (VYASDKDWIRFDQSNILCS) are Extracellular-facing. A disulfide bond links C108 and C186. A helical membrane pass occupies residues 110–131 (VFGISMVFSGLCPLFLGSTMAI). Topologically, residues 132 to 152 (ERCIGVTNPLFHSTKITSKHV) are cytoplasmic. Residues 153–175 (KMILSGVCMFAVFVALLPILGHR) form a helical membrane-spanning segment. Residues 176-198 (DYQIQASRTWCFYNTEHIEDWED) lie on the Extracellular side of the membrane. Residues 199-224 (RFYLLFFSSLGLLALGISFSCNAVTG) traverse the membrane as a helical segment. Residues 225–250 (VTLLRVKFRSQQHRQGRSHHLEMVIQ) lie on the Cytoplasmic side of the membrane. Residues 251–267 (LLAIMCVSCVCWSPFLV) form a helical membrane-spanning segment. The Extracellular segment spans residues 268–285 (TMANIAINGNNSPVTCET). The helical transmembrane segment at 286-307 (TLFALRMATWNQILDPWVYILL) threads the bilayer. Residues 308-366 (RKAVLRNLYKLASRCCGVNIISLHIWELSSIKNSLKVAAISESPAAEKENQQASSEAGL) lie on the Cytoplasmic side of the membrane.

This sequence belongs to the G-protein coupled receptor 1 family. Highest expression in pregnant ovary. Also found in a low extent in the kidney. In the brain, expressed in astrocytes and oligodendrocytes, and meningeal fibroblasts, but not in migroglia cells.

It localises to the cell membrane. Its function is as follows. Receptor for prostaglandin F2-alpha (PGF2-alpha). The activity of this receptor is mediated by G proteins which activate a phosphatidylinositol-calcium second messenger system. Initiates luteolysis in the corpus luteum. The chain is Prostaglandin F2-alpha receptor (Ptgfr) from Rattus norvegicus (Rat).